The following is a 256-amino-acid chain: Glucosamine-6-phosphate deaminase (256 aa).

D68 serves as the catalytic Proton acceptor; for enolization step. The active-site For ring-opening step is the N137. Residue H139 is the Proton acceptor; for ring-opening step of the active site. E144 functions as the For ring-opening step in the catalytic mechanism.

This sequence belongs to the glucosamine/galactosamine-6-phosphate isomerase family. NagB subfamily.

It carries out the reaction alpha-D-glucosamine 6-phosphate + H2O = beta-D-fructose 6-phosphate + NH4(+). The protein operates within amino-sugar metabolism; N-acetylneuraminate degradation; D-fructose 6-phosphate from N-acetylneuraminate: step 5/5. Catalyzes the reversible isomerization-deamination of glucosamine 6-phosphate (GlcN6P) to form fructose 6-phosphate (Fru6P) and ammonium ion. The protein is Glucosamine-6-phosphate deaminase of Mycoplasmopsis pulmonis (strain UAB CTIP) (Mycoplasma pulmonis).